The following is a 473-amino-acid chain: Ribulose bisphosphate carboxylase large chain (473 aa).

Position 8 is an N6,N6,N6-trimethyllysine (K8). The substrate site is built by N117 and T167. Catalysis depends on K169, which acts as the Proton acceptor. K171 contacts substrate. Residues K195, D197, and E198 each contribute to the Mg(2+) site. Residue K195 is modified to N6-carboxylysine. Residue H288 is the Proton acceptor of the active site. Residues R289, H321, and S373 each coordinate substrate.

Belongs to the RuBisCO large chain family. Type I subfamily. Heterohexadecamer of 8 large chains and 8 small chains; disulfide-linked. The disulfide link is formed within the large subunit homodimers. The cofactor is Mg(2+). In terms of processing, the disulfide bond which can form in the large chain dimeric partners within the hexadecamer appears to be associated with oxidative stress and protein turnover.

Its subcellular location is the plastid. It is found in the chloroplast. It catalyses the reaction 2 (2R)-3-phosphoglycerate + 2 H(+) = D-ribulose 1,5-bisphosphate + CO2 + H2O. It carries out the reaction D-ribulose 1,5-bisphosphate + O2 = 2-phosphoglycolate + (2R)-3-phosphoglycerate + 2 H(+). RuBisCO catalyzes two reactions: the carboxylation of D-ribulose 1,5-bisphosphate, the primary event in carbon dioxide fixation, as well as the oxidative fragmentation of the pentose substrate in the photorespiration process. Both reactions occur simultaneously and in competition at the same active site. This Amorphophallus titanum (Titan arum) protein is Ribulose bisphosphate carboxylase large chain.